The primary structure comprises 287 residues: Hydroxysteroid 11-beta-dehydrogenase 1-like protein (287 aa).

An N-terminal signal peptide occupies residues 1 to 22 (MKLYAKLLLCSICVAFIAVRWS). NADP(+) contacts are provided by residues 40-66 (GASTGIGEQLAYHYARLGAQIVITARR), 91-92 (DM), and 118-120 (NHI). Ser169 provides a ligand contact to substrate. The active-site Proton acceptor is Tyr182. NADP(+) contacts are provided by residues 182-186 (YASTK) and 215-221 (GLIDTDS).

Belongs to the short-chain dehydrogenases/reductases (SDR) family.

The protein resides in the secreted. The enzyme catalyses cortisone + NADPH + H(+) = cortisol + NADP(+). Its function is as follows. Unidirectional NADP(+)-dependent cortisol dehydrogenase (in vitro). The protein is Hydroxysteroid 11-beta-dehydrogenase 1-like protein (hsd11b1l) of Danio rerio (Zebrafish).